Here is a 313-residue protein sequence, read N- to C-terminus: Protein FixB (313 aa).

Position 255–283 (255–283 (LYLAVGISGQIQHMVGANASQTIFAINKD)) interacts with FAD.

It belongs to the ETF alpha-subunit/FixB family. In terms of assembly, heterodimer of FixA and FixB.

It participates in amine and polyamine metabolism; carnitine metabolism. Functionally, required for anaerobic carnitine reduction. May bring reductant to CaiA. This chain is Protein FixB, found in Escherichia coli O81 (strain ED1a).